A 250-amino-acid polypeptide reads, in one-letter code: Myelin basic protein (250 aa).

The segment covering 1 to 28 has biased composition (basic and acidic residues); sequence MGNHSGKRELSAEKASKDGEIHRGEAGK. The segment at 1 to 150 is disordered; it reads MGNHSGKREL…SQRSKYLATA (150 aa). Position 2 is an N-acetylalanine (G2). 2 positions are modified to phosphoserine: S31 and S40. The span at 95–113 shows a compositional bias: basic and acidic residues; that stretch reads FSRDAPGREDNTFKDRPSE. The residue at position 96 (S96) is a Phosphothreonine. Residue E113 is modified to Phosphoserine. At E122 the chain carries Phosphothreonine. T125 is modified (phosphotyrosine). A135, R139, S141, and S144 each carry phosphoserine. Phosphotyrosine is present on residues Y146 and L147. T149 bears the Phosphothreonine mark. S151 is modified (phosphoserine). S151 is subject to Phosphotyrosine. T152 bears the Phosphothreonine mark. 2 positions are modified to citrulline: R157 and R163. T167 carries the phosphothreonine modification. S172 carries the post-translational modification Phosphoserine. An omega-N-methylarginine mark is found at R175 and R181. A disordered region spans residues 175–250; sequence RFFSGDRGAP…SRSGSPMARR (76 aa). Residue S188 is modified to Phosphoserine. The residue at position 197 (T197) is a Phosphothreonine. A compositionally biased stretch (polar residues) spans 197–206; sequence THYGSLPQKS. Phosphotyrosine is present on Y199. Residue S206 is modified to Phosphoserine. Phosphothreonine occurs at positions 211, 226, and 229. The residue at position 234 (Q234) is a Deamidated glutamine. The residue at position 239 (R239) is a Citrulline. A Phosphoserine modification is found at S241. A Phosphoserine; by UHMK1 modification is found at S245. The residue at position 250 (R250) is a Citrulline.

Belongs to the myelin basic protein family. Homodimer. Post-translationally, as in other animals, several charge isomers may be produced as a result of optional post-translational modifications, such as phosphorylation of serine or threonine residues, deamidation of glutamine or asparagine residues, citrullination and methylation of arginine residues. In terms of processing, methylated on arginine residues; decreases with the age of the animal, making MBP more cationic. Phosphorylated by TAOK2, VRK2, MAPK11, MAPK12, MAPK14 and MINK1. Post-translationally, proteolytically cleaved in B cell lysosomes by cathepsin CTSG which degrades the major immunogenic MBP epitope and prevents the activation of MBP-specific autoreactive T cells. In terms of tissue distribution, in the embryo, isoform 1-isoform 3 are found in neurons within the central nervous system (primarily in pioneer neurons important in the formation of the cortex) and the peripheral nervous system. They are also expressed in the thymus, gut, lung and kidney. In the adult, isoform 1-isoform 3 are highly expressed in the brain (mainly in brain regions rich in oligodendrocytes) and spleen. Lower levels are seen in the heart, kidney and lung. Isoform 2 is also found in cells of the immune system. The isoforms missing the 134 first amino acids (isoform 4-isoform 13) are almost exclusively produced in the myelin-forming cells, the mature oligodendrocytes.

Its subcellular location is the myelin membrane. It is found in the cytoplasm. It localises to the nucleus. The classic group of MBP isoforms (isoform 4-isoform 13) are with PLP the most abundant protein components of the myelin membrane in the CNS. They have a role in both its formation and stabilization. The non-classic group of MBP isoforms (isoform 1-isoform 3/Golli-MBPs) may preferentially have a role in the early developing brain long before myelination, maybe as components of transcriptional complexes, and may also be involved in signaling pathways in T-cells and neural cells. Differential splicing events combined to optional post-translational modifications give a wide spectrum of isomers, with each of them potentially having a specialized function. This is Myelin basic protein (Mbp) from Mus musculus (Mouse).